Reading from the N-terminus, the 177-residue chain is O-acetyl-ADP-ribose deacetylase (177 aa).

In terms of domain architecture, Macro spans 1–175 (MKTRIHVVQG…LYERLLTQQG (175 aa)). Substrate-binding positions include 11–12 (DI), N25, 33–35 (GVD), and 122–126 (STGVY). Catalysis depends on D35, which acts as the Proton acceptor.

This sequence belongs to the MacroD-type family. YmdB subfamily. As to quaternary structure, homodimer. Interacts with RNase III.

The enzyme catalyses 3''-O-acetyl-ADP-D-ribose + H2O = ADP-D-ribose + acetate + H(+). It catalyses the reaction 2''-O-acetyl-ADP-D-ribose + H2O = ADP-D-ribose + acetate + H(+). Its function is as follows. Deacetylates O-acetyl-ADP ribose to yield ADP-ribose and free acetate. Down-regulates ribonuclease 3 (RNase III) activity. Acts by interacting directly with the region of the ribonuclease that is required for dimerization/activation. This is O-acetyl-ADP-ribose deacetylase from Shigella dysenteriae serotype 1 (strain Sd197).